A 1199-amino-acid polypeptide reads, in one-letter code: RNA-binding protein 20 (1199 aa).

Disordered stretches follow at residues 1-55 (MVLA…PQAS), 163-186 (PSTA…SLPS), and 320-346 (ERPP…PASQ). A compositionally biased stretch (low complexity) spans 25-42 (VMPGVQGPSVPQGQQGMQ). Residues 43 to 52 (PLPPPPPPQP) show a composition bias toward pro residues. Residues 170–183 (SPPSQTGGPGPSVS) show a composition bias toward low complexity. The U1-type zinc finger occupies 410-444 (HLPHICSICDKKVFDLKDWELHVKGKLHAQKCLLF). The RRM domain occupies 520–595 (RVVHICNLPE…EKLLIRMSTR (76 aa)). The span at 626-636 (EADRYGPERPR) shows a compositional bias: basic and acidic residues. 3 disordered regions span residues 626-685 (EADR…NGED), 720-884 (REKY…YPTN), and 944-1077 (GETL…SQAC). Positions 630-649 (YGPERPRSRSPMSRSLSPRS) are RS. Phosphoserine occurs at positions 637, 639, 642, 644, and 651. The segment covering 638–649 (RSPMSRSLSPRS) has biased composition (low complexity). Residues 667–685 (YAWRDEDRETVPRRENGED) are compositionally biased toward basic and acidic residues. Serine 728 carries the post-translational modification Phosphoserine. 3 stretches are compositionally biased toward basic and acidic residues: residues 739–758 (KGRE…DKYP), 770–831 (RKEE…KESQ), and 859–868 (ENTRTKKGQD). A Phosphoserine modification is found at serine 787. A phosphoserine mark is found at serine 871, serine 873, and serine 955. A compositionally biased stretch (polar residues) spans 962-971 (VPSTSASCPN). Serine 991, serine 1026, serine 1038, serine 1049, serine 1054, serine 1058, serine 1070, serine 1088, and serine 1093 each carry phosphoserine. Basic and acidic residues predominate over residues 1042 to 1055 (DDCKARGSPEDGSH). Residues 1067–1077 (PTESDLQSQAC) show a composition bias toward polar residues. A Matrin-type zinc finger spans residues 1133-1164 (FYCKLCGLFYTSEEAAKVSHCRSTVHYRNLQK). The tract at residues 1172-1199 (EGLKETEGTDSPSPERGGIGPHLERKKL) is disordered. Residues serine 1182 and serine 1184 each carry the phosphoserine modification.

In terms of assembly, associates with components of the U1 and U2 U1 small nuclear ribonucleoprotein complexes. In terms of processing, phosphorylation regulates the subcellular localization. Phosphorylation of Ser-637 and Ser-639 in the RS (arginine/serine-rich) region promotes nuclear localization of the protein. In contrast, phosphorylation of the C-terminal disordered region promotes localization to cytoplasmic ribonucleoprotein granules. Predominantly expressed in striated muscle, with highest expression in the heart. In differentiating myoblasts, expression correlates with sarcomere assembly: expression peaks when alpha-actinin is localized mainly in mature Z bodies within the nascent myofiber and expression declines as the sarcomeres continue to mature. Also expressed in kidney.

It is found in the nucleus. The protein resides in the cytoplasm. Its subcellular location is the cytoplasmic ribonucleoprotein granule. In terms of biological role, RNA-binding protein that acts as a regulator of mRNA splicing of a subset of genes encoding key structural proteins involved in cardiac development, such as TTN (Titin), CACNA1C, CAMK2D or PDLIM5/ENH. Acts as a repressor of mRNA splicing: specifically binds the 5'UCUU-3' motif that is predominantly found within intronic sequences of pre-mRNAs, leading to the exclusion of specific exons in target transcripts. RBM20-mediated exon skipping is hormone-dependent and is essential for TTN isoform transition in both cardiac and skeletal muscles. RBM20-mediated exon skipping of TTN provides substrates for the formation of circular RNA (circRNAs) from the TTN transcripts. Together with RBM24, promotes the expression of short isoforms of PDLIM5/ENH in cardiomyocytes. This is RNA-binding protein 20 from Mus musculus (Mouse).